The primary structure comprises 1415 residues: DNA-directed RNA polymerase subunit beta' (1415 aa).

Cysteine 70, cysteine 72, cysteine 85, and cysteine 88 together coordinate Zn(2+). Mg(2+) contacts are provided by aspartate 461, aspartate 463, and aspartate 465. Cysteine 820, cysteine 894, cysteine 901, and cysteine 904 together coordinate Zn(2+). The interval 1382 to 1415 (ERERAQAIADEEQSLFIEPPPVVQATTEGEGDNA) is disordered.

This sequence belongs to the RNA polymerase beta' chain family. In terms of assembly, the RNAP catalytic core consists of 2 alpha, 1 beta, 1 beta' and 1 omega subunit. When a sigma factor is associated with the core the holoenzyme is formed, which can initiate transcription. Requires Mg(2+) as cofactor. The cofactor is Zn(2+).

It catalyses the reaction RNA(n) + a ribonucleoside 5'-triphosphate = RNA(n+1) + diphosphate. DNA-dependent RNA polymerase catalyzes the transcription of DNA into RNA using the four ribonucleoside triphosphates as substrates. The polypeptide is DNA-directed RNA polymerase subunit beta' (Cupriavidus pinatubonensis (strain JMP 134 / LMG 1197) (Cupriavidus necator (strain JMP 134))).